The following is a 347-amino-acid chain: NHL repeat-containing protein 3 (347 aa).

The signal sequence occupies residues 1–22 (MARAWVCLAGAAFFLSCLVLHS). The NHL 1 repeat unit spans residues 47 to 93 (RLDLGWPKNSEYFTGATFCVAVDSLNGLVYVAQRGDNIPKVLVFSED). An N-linked (GlcNAc...) asparagine glycan is attached at Asn-101. NHL repeat units lie at residues 150-196 (TPGK…LSQD) and 200-243 (LWLR…FDKD). Asn-206 and Asn-278 each carry an N-linked (GlcNAc...) asparagine glycan. The stretch at 294-338 (GDCSVVSTIQLADQVLPHLLEVDRKTGAVYVAEIGAKQIQKYIPW) is one NHL 4 repeat.

This is NHL repeat-containing protein 3 (Nhlrc3) from Mus musculus (Mouse).